The following is a 583-amino-acid chain: Arginine--tRNA ligase (583 aa).

Positions 131 to 141 match the 'HIGH' region motif; sequence ANPTGPMHVGH.

Belongs to the class-I aminoacyl-tRNA synthetase family. In terms of assembly, monomer.

It localises to the cytoplasm. The enzyme catalyses tRNA(Arg) + L-arginine + ATP = L-arginyl-tRNA(Arg) + AMP + diphosphate. The sequence is that of Arginine--tRNA ligase from Parvibaculum lavamentivorans (strain DS-1 / DSM 13023 / NCIMB 13966).